The primary structure comprises 601 residues: Proteasome-associated ATPase (601 aa).

The span at 1–15 (MSGPRSGSGSGGSTG) shows a compositional bias: gly residues. Positions 1 to 31 (MSGPRSGSGSGGSTGRPGDAESRRSAYEKEA) are disordered. Over residues 18-31 (GDAESRRSAYEKEA) the composition is skewed to basic and acidic residues. Residues 18-106 (GDAESRRSAY…LKEEVDRLAQ (89 aa)) adopt a coiled-coil conformation. ATP is bound at residue 289–294 (GCGKTL). The docks into pockets in the proteasome alpha-ring stretch occupies residues 600–601 (YL).

Belongs to the AAA ATPase family. In terms of assembly, homohexamer. Assembles into a hexameric ring structure that caps the 20S proteasome core. Strongly interacts with the prokaryotic ubiquitin-like protein Pup through a hydrophobic interface; the interacting region of ARC lies in its N-terminal coiled-coil domain. There is one Pup binding site per ARC hexamer ring. Upon ATP-binding, the C-terminus of ARC interacts with the alpha-rings of the proteasome core, possibly by binding to the intersubunit pockets.

It functions in the pathway protein degradation; proteasomal Pup-dependent pathway. ATPase which is responsible for recognizing, binding, unfolding and translocation of pupylated proteins into the bacterial 20S proteasome core particle. May be essential for opening the gate of the 20S proteasome via an interaction with its C-terminus, thereby allowing substrate entry and access to the site of proteolysis. Thus, the C-termini of the proteasomal ATPase may function like a 'key in a lock' to induce gate opening and therefore regulate proteolysis. The protein is Proteasome-associated ATPase of Frankia alni (strain DSM 45986 / CECT 9034 / ACN14a).